The chain runs to 215 residues: UPF0502 protein YceH (215 aa).

An N6-acetyllysine modification is found at K80.

It belongs to the UPF0502 family.

The polypeptide is UPF0502 protein YceH (Shigella flexneri serotype 5b (strain 8401)).